The chain runs to 584 residues: Protein disulfide-isomerase-like protein of the testis (584 aa).

The first 20 residues, 1–20 (MDLLWMPLLLVAACVSAVHS), serve as a signal peptide directing secretion. 4 N-linked (GlcNAc...) asparagine glycosylation sites follow: Asn58, Asn128, Asn160, and Asn340. Residues 388–451 (LVKQLVGKNF…IAKIDVTAND (64 aa)) form the Thioredoxin domain. Asn540 carries N-linked (GlcNAc...) asparagine glycosylation. The short motif at 581-584 (KEEL) is the Prevents secretion from ER element.

The protein belongs to the protein disulfide isomerase family. As to quaternary structure, homodimer. The homodimer is not disulfide-linked. Interacts with ERO1A and CLGN. Post-translationally, N-glycosylated. Testis-specific.

The protein resides in the endoplasmic reticulum. Probable redox-inactive chaperone involved in spermatogenesis. This chain is Protein disulfide-isomerase-like protein of the testis (PDILT), found in Homo sapiens (Human).